A 465-amino-acid chain; its full sequence is Serine carboxypeptidase 24 (465 aa).

Residues methionine 1–serine 24 form the signal peptide. 3 N-linked (GlcNAc...) asparagine glycosylation sites follow: asparagine 54, asparagine 105, and asparagine 139. Cystine bridges form between cysteine 88-cysteine 349, cysteine 249-cysteine 260, and cysteine 285-cysteine 317. The active site involves serine 181. N-linked (GlcNAc...) asparagine glycans are attached at residues asparagine 250, asparagine 293, and asparagine 338. The propeptide at alanine 287–proline 316 is linker peptide. Catalysis depends on residues aspartate 386 and histidine 438.

The protein belongs to the peptidase S10 family. Heterodimer. Post-translationally, N-glycosylated. As to expression, expressed in shoots, leaves, cauline leaves, siliques and flowers. Expressed a low levels in roots and stems.

The protein localises to the secreted. Its subcellular location is the extracellular space. It catalyses the reaction Preferential release of a C-terminal arginine or lysine residue.. Its activity is regulated as follows. Completely inhibited by phenylmethylsulfonyl fluoride (PMSF) and partially by leupeptin. Functionally, active serine carboxypeptidase with broad substrate preference, including basic and hydrophilic groups. Processes a protein involved in an early event in the brassinosteroid signaling pathway. The sequence is that of Serine carboxypeptidase 24 (SCPL24) from Arabidopsis thaliana (Mouse-ear cress).